A 664-amino-acid chain; its full sequence is Armadillo repeat protein involved in nucleocytoplasmic transport Syo2 (664 aa).

The ARM repeat unit spans residues 77–119 (GLVSKLIDRISDDSVEVVVEATGALRNLAIEEGYSICMDMYRK).

It belongs to the nuclear import and ribosome assembly adapter family. Forms a heterotrimeric complex with rpl5 and rpl11a or rpl11b; interaction of this complex with kap104 allows the nuclear import of the heterotrimer. Component of a hexameric 5S RNP precursor complex; this complex acts as a precursor for ribosome assembly.

Its subcellular location is the cytoplasm. It localises to the nucleus. Nuclear import adapter that specifically recruits the two functionally and topologically linked ribosomal proteins rpl5 and rpl11 (encoded by rpl11a and rpl11b). Guarantees that this cargo pair remains bound together from the time of synthesis in the cytoplasm until delivery to the nascent 5S rRNA in the nucleus. This chain is Armadillo repeat protein involved in nucleocytoplasmic transport Syo2, found in Schizosaccharomyces pombe (strain 972 / ATCC 24843) (Fission yeast).